Here is a 295-residue protein sequence, read N- to C-terminus: UDP-3-O-acyl-N-acetylglucosamine deacetylase (295 aa).

Positions 75, 232, and 236 each coordinate Zn(2+). Catalysis depends on H259, which acts as the Proton donor.

Belongs to the LpxC family. Requires Zn(2+) as cofactor.

The catalysed reaction is a UDP-3-O-[(3R)-3-hydroxyacyl]-N-acetyl-alpha-D-glucosamine + H2O = a UDP-3-O-[(3R)-3-hydroxyacyl]-alpha-D-glucosamine + acetate. It participates in glycolipid biosynthesis; lipid IV(A) biosynthesis; lipid IV(A) from (3R)-3-hydroxytetradecanoyl-[acyl-carrier-protein] and UDP-N-acetyl-alpha-D-glucosamine: step 2/6. Functionally, catalyzes the hydrolysis of UDP-3-O-myristoyl-N-acetylglucosamine to form UDP-3-O-myristoylglucosamine and acetate, the committed step in lipid A biosynthesis. This Helicobacter pylori (strain ATCC 700392 / 26695) (Campylobacter pylori) protein is UDP-3-O-acyl-N-acetylglucosamine deacetylase.